A 328-amino-acid polypeptide reads, in one-letter code: UPF0421 protein SAR1980 (328 aa).

The next 4 helical transmembrane spans lie at 19 to 39, 61 to 81, 108 to 128, and 132 to 152; these read IAIFLTAVFCMALDLTPIYAI, LPATVIGAGFAVLFTYLFGDQ, VAVLTSLAMIPGIHDAYIFNF, and TLTAIIGLVTSGLINFMVFPP.

The protein belongs to the UPF0421 family.

It localises to the cell membrane. This chain is UPF0421 protein SAR1980, found in Staphylococcus aureus (strain MRSA252).